Reading from the N-terminus, the 332-residue chain is Ferredoxin--NADP reductase 1 (332 aa).

Residues D35, K43, F48, V88, F123, D284, and T325 each contribute to the FAD site.

Belongs to the ferredoxin--NADP reductase type 2 family. In terms of assembly, homodimer. It depends on FAD as a cofactor.

It catalyses the reaction 2 reduced [2Fe-2S]-[ferredoxin] + NADP(+) + H(+) = 2 oxidized [2Fe-2S]-[ferredoxin] + NADPH. The protein is Ferredoxin--NADP reductase 1 of Listeria welshimeri serovar 6b (strain ATCC 35897 / DSM 20650 / CCUG 15529 / CIP 8149 / NCTC 11857 / SLCC 5334 / V8).